The chain runs to 177 residues: MIDDDGYRPNVGIVICNRQGQVMWARRFGQHSWQFPQGGINPGESAEQAMYRELFEEVGLQRKDVRILATTRNWLRYKLPKRLVRWDTKPVCIGQKQKWFLLQLMSNDADINMQTSSTPEFDGWRWVSFWYPVRQVVSFKRDVYRRVMKEFASVVMPLQESAPPQRNPSPAWRRKRG.

The Nudix hydrolase domain occupies 6 to 149 (GYRPNVGIVI…KRDVYRRVMK (144 aa)). The Nudix box motif lies at 38–59 (GGINPGESAEQAMYRELFEEVG).

The protein belongs to the Nudix hydrolase family. RppH subfamily. It depends on a divalent metal cation as a cofactor.

In terms of biological role, accelerates the degradation of transcripts by removing pyrophosphate from the 5'-end of triphosphorylated RNA, leading to a more labile monophosphorylated state that can stimulate subsequent ribonuclease cleavage. The chain is RNA pyrophosphohydrolase from Cronobacter sakazakii (strain ATCC BAA-894) (Enterobacter sakazakii).